We begin with the raw amino-acid sequence, 351 residues long: Ribosomal RNA large subunit methyltransferase M (351 aa).

S-adenosyl-L-methionine is bound by residues Ser186, Ala219–Gly222, Asp238, Asp258, and Asp274. Catalysis depends on Lys303, which acts as the Proton acceptor.

The protein belongs to the class I-like SAM-binding methyltransferase superfamily. RNA methyltransferase RlmE family. RlmM subfamily. In terms of assembly, monomer.

The protein resides in the cytoplasm. The enzyme catalyses cytidine(2498) in 23S rRNA + S-adenosyl-L-methionine = 2'-O-methylcytidine(2498) in 23S rRNA + S-adenosyl-L-homocysteine + H(+). In terms of biological role, catalyzes the 2'-O-methylation at nucleotide C2498 in 23S rRNA. The polypeptide is Ribosomal RNA large subunit methyltransferase M (Xylella fastidiosa (strain 9a5c)).